Consider the following 539-residue polypeptide: Chaperonin GroEL (539 aa).

Residues 29-32, 86-90, glycine 413, and aspartate 492 each bind ATP; these read TLGP and DGTTT.

The protein belongs to the chaperonin (HSP60) family. In terms of assembly, forms a cylinder of 14 subunits composed of two heptameric rings stacked back-to-back. Interacts with the co-chaperonin GroES.

Its subcellular location is the cytoplasm. It carries out the reaction ATP + H2O + a folded polypeptide = ADP + phosphate + an unfolded polypeptide.. Together with its co-chaperonin GroES, plays an essential role in assisting protein folding. The GroEL-GroES system forms a nano-cage that allows encapsulation of the non-native substrate proteins and provides a physical environment optimized to promote and accelerate protein folding. The sequence is that of Chaperonin GroEL from Fusobacterium nucleatum subsp. polymorphum (Fusobacterium polymorphum).